A 696-amino-acid chain; its full sequence is Ribonucleoside-diphosphate reductase subunit beta (696 aa).

Residues Asp-97, Glu-127, and His-130 each contribute to the Fe cation site. Tyr-134 is an active-site residue. Fe cation-binding residues include Glu-194 and Glu-228. One can recognise a DOD-type homing endonuclease domain in the interval 377–507; sequence DGTIDSKRNG…FVQALCALGG (131 aa). Residue His-577 participates in Fe cation binding.

Belongs to the ribonucleoside diphosphate reductase small chain family. In terms of assembly, tetramer of two alpha and two beta subunits. The cofactor is Fe cation. Post-translationally, this protein undergoes a protein self splicing that involves a post-translational excision of the intervening region (intein) followed by peptide ligation.

The enzyme catalyses a 2'-deoxyribonucleoside 5'-diphosphate + [thioredoxin]-disulfide + H2O = a ribonucleoside 5'-diphosphate + [thioredoxin]-dithiol. Functionally, provides the precursors necessary for DNA synthesis. Catalyzes the biosynthesis of deoxyribonucleotides from the corresponding ribonucleotides. This chain is Ribonucleoside-diphosphate reductase subunit beta (nrdB), found in Aquifex aeolicus (strain VF5).